The chain runs to 407 residues: Histone acetyltransferase mst2 (407 aa).

The MYST-type HAT domain occupies 98-372 (PQPTSIRYLY…VNPKLLRWTP (275 aa)). Residues 131–156 (LYICESCLKYMNSDHVLQRHKMKCSW) form a C2HC MYST-type zinc finger. Lysine 198 carries the N6-acetyllysine; by autocatalysis modification. Acetyl-CoA-binding positions include 241–243 (ILT), threonine 243, and 248–254 (QRRGYGV). The active-site Proton donor/acceptor is the glutamate 274. The acetyl-CoA site is built by serine 278 and serine 287.

The protein belongs to the MYST (SAS/MOZ) family. In terms of assembly, component of the mst2 complex composed of at least eaf6, mst2, nto1, pdp3, ptf1, ptf2 and tfg3. Post-translationally, autoacetylation at Lys-198 is required for proper function.

The protein localises to the cytoplasm. The protein resides in the nucleus. The enzyme catalyses L-lysyl-[protein] + acetyl-CoA = N(6)-acetyl-L-lysyl-[protein] + CoA + H(+). Functionally, component of the mst2 complex which is a highly specific H3 lysine 14 (H3K14) acetyltransferase that functions together with gcn5 to regulate global levels of H3K14 acetylation (H3K14ac), critical for DNA damage checkpoint activation. Negatively regulates telomere silencing. Telomere silencing is increased due to histone hypoacetylation and/or an increase in the ratio of methylated histones to acetylated histones. Telomeric histone acetylation contributes to normal meiotic progression. The sequence is that of Histone acetyltransferase mst2 (mst2) from Schizosaccharomyces pombe (strain 972 / ATCC 24843) (Fission yeast).